The sequence spans 492 residues: Bifunctional purine biosynthesis protein PurH (492 aa).

Residues 1 to 144 (MRKALLSVSD…KNFRHVITVV (144 aa)) form the MGS-like domain.

The protein belongs to the PurH family.

It catalyses the reaction (6R)-10-formyltetrahydrofolate + 5-amino-1-(5-phospho-beta-D-ribosyl)imidazole-4-carboxamide = 5-formamido-1-(5-phospho-D-ribosyl)imidazole-4-carboxamide + (6S)-5,6,7,8-tetrahydrofolate. The catalysed reaction is IMP + H2O = 5-formamido-1-(5-phospho-D-ribosyl)imidazole-4-carboxamide. It participates in purine metabolism; IMP biosynthesis via de novo pathway; 5-formamido-1-(5-phospho-D-ribosyl)imidazole-4-carboxamide from 5-amino-1-(5-phospho-D-ribosyl)imidazole-4-carboxamide (10-formyl THF route): step 1/1. It functions in the pathway purine metabolism; IMP biosynthesis via de novo pathway; IMP from 5-formamido-1-(5-phospho-D-ribosyl)imidazole-4-carboxamide: step 1/1. The chain is Bifunctional purine biosynthesis protein PurH from Macrococcus caseolyticus (strain JCSC5402) (Macrococcoides caseolyticum).